The sequence spans 98 residues: DNA-binding protein Fis (98 aa).

The H-T-H motif DNA-binding region spans 74–93; that stretch reads QTRAATMLGINRGTLRKKLK.

Belongs to the transcriptional regulatory Fis family. As to quaternary structure, homodimer.

Activates ribosomal RNA transcription. Plays a direct role in upstream activation of rRNA promoters. This is DNA-binding protein Fis from Haemophilus ducreyi (strain 35000HP / ATCC 700724).